Here is a 134-residue protein sequence, read N- to C-terminus: Profilin-3 (134 aa).

Cys-13 and Cys-118 are disulfide-bonded. An Involved in PIP2 interaction motif is present at residues 84-100 (AVIRGKKGSGGITIKKT). Thr-114 carries the phosphothreonine modification.

Belongs to the profilin family. As to quaternary structure, occurs in many kinds of cells as a complex with monomeric actin in a 1:1 ratio. Post-translationally, phosphorylated by MAP kinases.

The protein resides in the cytoplasm. It is found in the cytoskeleton. Binds to actin and affects the structure of the cytoskeleton. At high concentrations, profilin prevents the polymerization of actin, whereas it enhances it at low concentrations. The sequence is that of Profilin-3 from Olea europaea (Common olive).